The chain runs to 175 residues: 3-hydroxyanthranilate 3,4-dioxygenase (175 aa).

Arg-45 provides a ligand contact to O2. Fe cation is bound by residues His-49, Glu-55, and His-93. Glu-55 lines the substrate pocket. Residues Arg-97 and Glu-107 each coordinate substrate. A divalent metal cation is bound by residues Cys-122, Cys-125, Cys-159, and Cys-162.

It belongs to the 3-HAO family. Requires Fe(2+) as cofactor.

Its subcellular location is the cytoplasm. The catalysed reaction is 3-hydroxyanthranilate + O2 = (2Z,4Z)-2-amino-3-carboxymuconate 6-semialdehyde. It functions in the pathway cofactor biosynthesis; NAD(+) biosynthesis; quinolinate from L-kynurenine: step 3/3. Catalyzes the oxidative ring opening of 3-hydroxyanthranilate to 2-amino-3-carboxymuconate semialdehyde, which spontaneously cyclizes to quinolinate. This Lodderomyces elongisporus (strain ATCC 11503 / CBS 2605 / JCM 1781 / NBRC 1676 / NRRL YB-4239) (Yeast) protein is 3-hydroxyanthranilate 3,4-dioxygenase.